Consider the following 431-residue polypeptide: STE20-related kinase adapter protein alpha (431 aa).

2 positions are modified to phosphoserine: Ser2 and Ser46. A Protein kinase domain is found at 69–379; the sequence is YELLTVIGKG…ASTLLNHSFF (311 aa). The tract at residues 310 to 347 is disordered; the sequence is LTMSPSRSVANSGLSDSLTTSTPRPSNGDSPSHPYHRT. Residues 312–339 show a composition bias toward polar residues; sequence MSPSRSVANSGLSDSLTTSTPRPSNGDS. 2 positions are modified to phosphothreonine; by LKB1: Thr329 and Thr401. Thr419 is modified (phosphothreonine).

It belongs to the protein kinase superfamily. STE Ser/Thr protein kinase family. STE20 subfamily. Component of a trimeric complex composed of STK11/LKB1, STRAD (STRADA or STRADB) and CAB39/MO25 (CAB39/MO25alpha or CAB39L/MO25beta): the complex tethers STK11/LKB1 in the cytoplasm and stimulates its catalytic activity.

The protein localises to the nucleus. It is found in the cytoplasm. Functionally, pseudokinase which, in complex with CAB39/MO25 (CAB39/MO25alpha or CAB39L/MO25beta), binds to and activates STK11/LKB1. Adopts a closed conformation typical of active protein kinases and binds STK11/LKB1 as a pseudosubstrate, promoting conformational change of STK11/LKB1 in an active conformation. The protein is STE20-related kinase adapter protein alpha (STRADA) of Pongo abelii (Sumatran orangutan).